Consider the following 578-residue polypeptide: Malonate--CoA ligase ACSF3, mitochondrial (578 aa).

The N-terminal 19 residues, 1-19 (MRVGAFLGRSLFSCSHVRG), are a transit peptide targeting the mitochondrion. 205–213 (TSGTTGRPK) lines the ATP pocket. Residues 394 to 413 (QNPRKEGTSYTTHAQGDSTG) are disordered. Positions 459, 473, and 565 each coordinate ATP.

The protein belongs to the ATP-dependent AMP-binding enzyme family.

Its subcellular location is the mitochondrion. It carries out the reaction tetracosanoate + ATP + CoA = tetracosanoyl-CoA + AMP + diphosphate. The catalysed reaction is malonate + ATP + CoA = malonyl-CoA + AMP + diphosphate. Functionally, catalyzes the initial reaction in intramitochondrial fatty acid synthesis, by activating malonate and methylmalonate, but not acetate, into their respective CoA thioester. May have some preference toward very-long-chain substrates. This chain is Malonate--CoA ligase ACSF3, mitochondrial, found in Xenopus laevis (African clawed frog).